Here is a 215-residue protein sequence, read N- to C-terminus: Cytochrome b6 (215 aa).

Residues 32 to 52 (IFYCIGGIVFTSFLIQVASGF) traverse the membrane as a helical segment. Residue cysteine 35 coordinates heme c. 2 residues coordinate heme b: histidine 86 and histidine 100. Helical transmembrane passes span 90-110 (ASMMVLMLILHMFRVYLTGGF), 116-136 (LTWVTGVILAVLTVSFGVTGY), and 186-206 (LHTFVLPLLTAVFMLMHFLMI). Heme b-binding residues include histidine 187 and histidine 202.

This sequence belongs to the cytochrome b family. PetB subfamily. In terms of assembly, the 4 large subunits of the cytochrome b6-f complex are cytochrome b6, subunit IV (17 kDa polypeptide, PetD), cytochrome f and the Rieske protein, while the 4 small subunits are PetG, PetL, PetM and PetN. The complex functions as a dimer. The cofactor is heme b. It depends on heme c as a cofactor.

Its subcellular location is the plastid. The protein resides in the chloroplast thylakoid membrane. Functionally, component of the cytochrome b6-f complex, which mediates electron transfer between photosystem II (PSII) and photosystem I (PSI), cyclic electron flow around PSI, and state transitions. This Gracilaria tenuistipitata var. liui (Red alga) protein is Cytochrome b6.